We begin with the raw amino-acid sequence, 140 residues long: Large ribosomal subunit protein uL13 (140 aa).

Belongs to the universal ribosomal protein uL13 family. In terms of assembly, part of the 50S ribosomal subunit.

Functionally, this protein is one of the early assembly proteins of the 50S ribosomal subunit, although it is not seen to bind rRNA by itself. It is important during the early stages of 50S assembly. The chain is Large ribosomal subunit protein uL13 from Methanosarcina barkeri (strain Fusaro / DSM 804).